The following is a 167-amino-acid chain: Crossover junction endodeoxyribonuclease RuvC (167 aa).

Active-site residues include Asp7, Glu67, and Asp139. 3 residues coordinate Mg(2+): Asp7, Glu67, and Asp139.

It belongs to the RuvC family. As to quaternary structure, homodimer which binds Holliday junction (HJ) DNA. The HJ becomes 2-fold symmetrical on binding to RuvC with unstacked arms; it has a different conformation from HJ DNA in complex with RuvA. In the full resolvosome a probable DNA-RuvA(4)-RuvB(12)-RuvC(2) complex forms which resolves the HJ. It depends on Mg(2+) as a cofactor.

It is found in the cytoplasm. It catalyses the reaction Endonucleolytic cleavage at a junction such as a reciprocal single-stranded crossover between two homologous DNA duplexes (Holliday junction).. Functionally, the RuvA-RuvB-RuvC complex processes Holliday junction (HJ) DNA during genetic recombination and DNA repair. Endonuclease that resolves HJ intermediates. Cleaves cruciform DNA by making single-stranded nicks across the HJ at symmetrical positions within the homologous arms, yielding a 5'-phosphate and a 3'-hydroxyl group; requires a central core of homology in the junction. The consensus cleavage sequence is 5'-(A/T)TT(C/G)-3'. Cleavage occurs on the 3'-side of the TT dinucleotide at the point of strand exchange. HJ branch migration catalyzed by RuvA-RuvB allows RuvC to scan DNA until it finds its consensus sequence, where it cleaves and resolves the cruciform DNA. The protein is Crossover junction endodeoxyribonuclease RuvC of Zymomonas mobilis subsp. mobilis (strain ATCC 31821 / ZM4 / CP4).